The sequence spans 213 residues: Holliday junction resolvase RecU (213 aa).

Mg(2+) contacts are provided by Thr98, Asp100, Glu113, and Gln132.

This sequence belongs to the RecU family. Mg(2+) is required as a cofactor.

Its subcellular location is the cytoplasm. The catalysed reaction is Endonucleolytic cleavage at a junction such as a reciprocal single-stranded crossover between two homologous DNA duplexes (Holliday junction).. Functionally, endonuclease that resolves Holliday junction intermediates in genetic recombination. Cleaves mobile four-strand junctions by introducing symmetrical nicks in paired strands. Promotes annealing of linear ssDNA with homologous dsDNA. Required for DNA repair, homologous recombination and chromosome segregation. The protein is Holliday junction resolvase RecU of Ligilactobacillus salivarius (strain UCC118) (Lactobacillus salivarius).